A 585-amino-acid polypeptide reads, in one-letter code: Bestrophin-1 (585 aa).

Over 1–31 (MTITYTSQVANARLGSFSRLLLCWRGSIYKL) the chain is Cytoplasmic. A Ca(2+)-binding site is contributed by alanine 10. Residues 32–51 (LYGEFLIFLLCYYIIRFIYR) form a helical membrane-spanning segment. At 52 to 60 (LALTEEQQL) the chain is on the extracellular side. A helical transmembrane segment spans residues 61 to 82 (MFEKLTLYCDSYIQLIPISFVL). The Cytoplasmic segment spans residues 83–237 (GFYVTLVVTR…DWISIPLVYT (155 aa)). Residues 238–255 (QVVTVAVYSFFLTCLVGR) traverse the membrane as a helical segment. At 256 to 274 (QFLNPAKAYPGHELDLVVP) the chain is on the extracellular side. Residues 275-288 (VFTFLQFFFYVGWL) traverse the membrane as a helical segment. The Cytoplasmic segment spans residues 289-585 (KVAEQLINPF…ALENRDEAHS (297 aa)). Ca(2+)-binding residues include glutamine 293, asparagine 296, aspartate 301, and aspartate 304. Residues 346-379 (PYTAASAQFRRASFMGSTFNISLNKEEMEFQPNQ) form an auto-inhibitory segment region.

This sequence belongs to the anion channel-forming bestrophin (TC 1.A.46) family. Calcium-sensitive chloride channel subfamily. Interacts with YWHAG; this interaction promotes the ligand-gated L-glutamate channel activity leading to the positive regulation of NMDA glutamate receptor activity through the L-glutamate secretion. As to expression, predominantly expressed in the basolateral membrane of the retinal pigment epithelium.

Its subcellular location is the cell membrane. It is found in the basolateral cell membrane. The catalysed reaction is chloride(in) = chloride(out). The enzyme catalyses hydrogencarbonate(in) = hydrogencarbonate(out). It catalyses the reaction 4-aminobutanoate(in) = 4-aminobutanoate(out). It carries out the reaction L-glutamate(out) = L-glutamate(in). With respect to regulation, inactivated by sulfhydryl-reactive agents. In terms of biological role, ligand-gated anion channel that allows the movement of anions across cell membranes when activated by calcium (Ca2+). Allows the movement of chloride and hydrogencarbonate. Found in a partially open conformation leading to significantly smaller chloride movement. Upon F2R/PAR-1 activation, the sequestered calcium is released into the cytosol of astrocytes, leading to the (Ca2+)-dependent release of L-glutamate into the synaptic cleft that targets the neuronal postsynaptic GRIN2A/NMDAR receptor resulting in the synaptic plasticity regulation. Upon activation of the norepinephrine-alpha-1 adrenergic receptor signaling pathway, transports as well D-serine than L-glutamate in a (Ca2+)-dependent manner, leading to activation of adjacent NMDAR receptors and therefore regulates the heterosynaptic long-term depression and metaplasticity during initial memory acquisition. Releases the 4-aminobutanoate neurotransmitter in a (Ca2+)-dependent manner, and participates in its tonic release from cerebellar glial cells. The protein is Bestrophin-1 of Homo sapiens (Human).